The sequence spans 343 residues: Cytoplasmic tRNA 2-thiolation protein 1 (343 aa).

It belongs to the TtcA family. CTU1/NCS6/ATPBD3 subfamily.

Its subcellular location is the cytoplasm. The protein operates within tRNA modification; 5-methoxycarbonylmethyl-2-thiouridine-tRNA biosynthesis. In terms of biological role, plays a central role in 2-thiolation of mcm(5)S(2)U at tRNA wobble positions of tRNA(Lys), tRNA(Glu) and tRNA(Gln). Directly binds tRNAs and probably acts by catalyzing adenylation of tRNAs, an intermediate required for 2-thiolation. It is unclear whether it acts as a sulfurtransferase that transfers sulfur from thiocarboxylated URM1 onto the uridine of tRNAs at wobble position. The polypeptide is Cytoplasmic tRNA 2-thiolation protein 1 (Drosophila melanogaster (Fruit fly)).